A 430-amino-acid chain; its full sequence is Solanesyl-diphosphate synthase 1, mitochondrial (430 aa).

A mitochondrion-targeting transit peptide spans 1–31 (MSWRWALARRVAALGATSGGGDGATAQAQRL). Isopentenyl diphosphate contacts are provided by Lys133, Arg136, and His182. Mg(2+)-binding residues include Asp189 and Asp193. Arg198 serves as a coordination point for an all-trans-polyprenyl diphosphate. Arg199 is a binding site for isopentenyl diphosphate. An all-trans-polyprenyl diphosphate contacts are provided by Lys275, Thr276, Gln313, and Lys330.

This sequence belongs to the FPP/GGPP synthase family. As to quaternary structure, homodimer. The cofactor is Mg(2+). In terms of tissue distribution, expressed in leaves, stems and roots. Highest expression in roots.

Its subcellular location is the mitochondrion. It catalyses the reaction 7 isopentenyl diphosphate + (2E)-geranyl diphosphate = all-trans-nonaprenyl diphosphate + 7 diphosphate. Its pathway is cofactor biosynthesis; ubiquinone biosynthesis. Its function is as follows. Involved in the supply of solanesyl diphosphate for ubiquinone-9 (UQ-9) biosynthesis in mitochondria. Farnesyl diphosphate is the preferred substrate. The protein is Solanesyl-diphosphate synthase 1, mitochondrial of Oryza sativa subsp. japonica (Rice).